Reading from the N-terminus, the 719-residue chain is Lanosterol synthase (719 aa).

The PFTB 1 repeat unit spans residues Arg118–Gly160. The active-site Proton donor is Asp451. PFTB repeat units follow at residues Leu478–His523, Val555–Lys595, and Ser604–Thr645.

The protein belongs to the terpene cyclase/mutase family.

It carries out the reaction (S)-2,3-epoxysqualene = lanosterol. Its pathway is terpene metabolism; lanosterol biosynthesis; lanosterol from farnesyl diphosphate: step 3/3. Functionally, catalyzes the cyclization of (S)-2,3 oxidosqualene to lanosterol, a reaction that forms the sterol nucleus. In Pneumocystis carinii, this protein is Lanosterol synthase (ERG7).